The chain runs to 163 residues: 6,7-dimethyl-8-ribityllumazine synthase (163 aa).

5-amino-6-(D-ribitylamino)uracil-binding positions include F27, 58–60, and 87–89; these read ALE and CVV. 92–93 is a (2S)-2-hydroxy-3-oxobutyl phosphate binding site; that stretch reads DT. The active-site Proton donor is H95. Residue N120 coordinates 5-amino-6-(D-ribitylamino)uracil. R134 serves as a coordination point for (2S)-2-hydroxy-3-oxobutyl phosphate.

Belongs to the DMRL synthase family.

The enzyme catalyses (2S)-2-hydroxy-3-oxobutyl phosphate + 5-amino-6-(D-ribitylamino)uracil = 6,7-dimethyl-8-(1-D-ribityl)lumazine + phosphate + 2 H2O + H(+). It functions in the pathway cofactor biosynthesis; riboflavin biosynthesis; riboflavin from 2-hydroxy-3-oxobutyl phosphate and 5-amino-6-(D-ribitylamino)uracil: step 1/2. Its function is as follows. Catalyzes the formation of 6,7-dimethyl-8-ribityllumazine by condensation of 5-amino-6-(D-ribitylamino)uracil with 3,4-dihydroxy-2-butanone 4-phosphate. This is the penultimate step in the biosynthesis of riboflavin. In Nitrobacter winogradskyi (strain ATCC 25391 / DSM 10237 / CIP 104748 / NCIMB 11846 / Nb-255), this protein is 6,7-dimethyl-8-ribityllumazine synthase.